Here is a 301-residue protein sequence, read N- to C-terminus: Probable alpha-L-glutamate ligase (301 aa).

The 184-residue stretch at 104–287 folds into the ATP-grasp domain; the sequence is LQLLSRKGIG…IAGLIVAYME (184 aa). Residues lysine 141, 178–179, aspartate 187, and 211–213 each bind ATP; these read EF and RSN. Positions 248, 260, and 262 each coordinate Mg(2+). Aspartate 248, glutamate 260, and asparagine 262 together coordinate Mn(2+).

This sequence belongs to the RimK family. Mg(2+) is required as a cofactor. The cofactor is Mn(2+).

In Cellvibrio japonicus (strain Ueda107) (Pseudomonas fluorescens subsp. cellulosa), this protein is Probable alpha-L-glutamate ligase.